A 145-amino-acid chain; its full sequence is Ribosome maturation factor RimP (145 aa).

This sequence belongs to the RimP family.

It localises to the cytoplasm. Required for maturation of 30S ribosomal subunits. The polypeptide is Ribosome maturation factor RimP (Borreliella afzelii (strain PKo) (Borrelia afzelii)).